Reading from the N-terminus, the 256-residue chain is Dihydroorotate dehydrogenase B (NAD(+)), electron transfer subunit (256 aa).

The FAD-binding FR-type domain maps to 2 to 100; that stretch reads IRLETMKVVA…MGPQGNGFDL (99 aa). Residues 51 to 54, 68 to 70, and 75 to 76 each bind FAD; these read RPIS, IYR, and GT. [2Fe-2S] cluster contacts are provided by Cys220, Cys225, Cys228, and Cys243.

This sequence belongs to the PyrK family. In terms of assembly, heterotetramer of 2 PyrK and 2 PyrD type B subunits. The cofactor is [2Fe-2S] cluster. FAD is required as a cofactor.

Its pathway is pyrimidine metabolism; UMP biosynthesis via de novo pathway; orotate from (S)-dihydroorotate (NAD(+) route): step 1/1. Responsible for channeling the electrons from the oxidation of dihydroorotate from the FMN redox center in the PyrD type B subunit to the ultimate electron acceptor NAD(+). This is Dihydroorotate dehydrogenase B (NAD(+)), electron transfer subunit from Streptococcus pneumoniae (strain ATCC BAA-255 / R6).